Here is a 215-residue protein sequence, read N- to C-terminus: Ribose-5-phosphate isomerase A (215 aa).

Substrate-binding positions include Thr26–Thr29, Asp79–Asp82, and Lys92–Gly95. Residue Glu101 is the Proton acceptor of the active site. Lys119 is a substrate binding site.

It belongs to the ribose 5-phosphate isomerase family. Homodimer.

The catalysed reaction is aldehydo-D-ribose 5-phosphate = D-ribulose 5-phosphate. The protein operates within carbohydrate degradation; pentose phosphate pathway; D-ribose 5-phosphate from D-ribulose 5-phosphate (non-oxidative stage): step 1/1. Its function is as follows. Catalyzes the reversible conversion of ribose-5-phosphate to ribulose 5-phosphate. This is Ribose-5-phosphate isomerase A from Xanthomonas euvesicatoria pv. vesicatoria (strain 85-10) (Xanthomonas campestris pv. vesicatoria).